Consider the following 149-residue polypeptide: Large ribosomal subunit protein bL9 (149 aa).

It belongs to the bacterial ribosomal protein bL9 family.

Its function is as follows. Binds to the 23S rRNA. This is Large ribosomal subunit protein bL9 from Alkaliphilus metalliredigens (strain QYMF).